Consider the following 365-residue polypeptide: Endophilin-B1 (365 aa).

An N-acetylmethionine modification is found at M1. Positions M1–L30 are membrane-binding amphipathic helix. Positions M1 to E37 are required for membrane binding. In terms of domain architecture, BAR spans E27–S261. Position 145 is a phosphothreonine; by CDK5 (T145). Positions K156 to A185 form a coiled coil. The SH3 domain maps to S305–N365.

The protein belongs to the endophilin family. Homodimer, and heterodimer with SH3GLB2. Binds BAX; induction of apoptosis augments BAX binding. Binds DNM1, HTT, AMPH, BIN1 and ARFGAP1. Interacts with UVRAG; UVRAG bridges the interaction to BECN1 indicative for an association with the PI3K complex II (PI3KC3-C2). Post-translationally, phosphorylated at Thr-145 by CDK5; this phosphorylation is required for autophagy induction in starved neurons and facilitates homodimerization. In terms of tissue distribution, expressed in brain, heart, lung and spleen. Low level in liver and testis.

It is found in the cytoplasm. It localises to the golgi apparatus membrane. The protein resides in the mitochondrion outer membrane. The protein localises to the cytoplasmic vesicle. Its subcellular location is the autophagosome membrane. It is found in the midbody. Its function is as follows. May be required for normal outer mitochondrial membrane dynamics. Required for coatomer-mediated retrograde transport in certain cells. May recruit other proteins to membranes with high curvature. May promote membrane fusion. Involved in activation of caspase-dependent apoptosis by promoting BAX/BAK1 activation. Involved in caspase-independent apoptosis during nutrition starvation and involved in the regulation of autophagy. Activates lipid kinase activity of PIK3C3 during autophagy probably by associating with the PI3K complex II (PI3KC3-C2). Associated with PI3KC3-C2 during autophagy may regulate the trafficking of ATG9A from the Golgi complex to the peripheral cytoplasm for the formation of autophagosomes by inducing Golgi membrane tubulation and fragmentation. Involved in regulation of degradative endocytic trafficking and cytokinesis, probably in the context of PI3KC3-C2. The protein is Endophilin-B1 of Rattus norvegicus (Rat).